A 265-amino-acid polypeptide reads, in one-letter code: Tryptophan 2,3-dioxygenase (265 aa).

Residues 38 to 42 (FIVVH) and Arg104 contribute to the substrate site. A heme-binding site is contributed by His223. Thr237 is a substrate binding site.

The protein belongs to the tryptophan 2,3-dioxygenase family. In terms of assembly, homotetramer. Heme is required as a cofactor.

The catalysed reaction is L-tryptophan + O2 = N-formyl-L-kynurenine. It functions in the pathway amino-acid degradation; L-tryptophan degradation via kynurenine pathway; L-kynurenine from L-tryptophan: step 1/2. Functionally, heme-dependent dioxygenase that catalyzes the oxidative cleavage of the L-tryptophan (L-Trp) pyrrole ring and converts L-tryptophan to N-formyl-L-kynurenine. Catalyzes the oxidative cleavage of the indole moiety. The polypeptide is Tryptophan 2,3-dioxygenase (Anaeromyxobacter dehalogenans (strain 2CP-C)).